The following is a 261-amino-acid chain: Glucose 1-dehydrogenase 3 (261 aa).

11-35 (VITGGSTGLGRAMAVRFGQEEAKVV) contributes to the NAD(+) binding site. Position 145 (serine 145) interacts with substrate. The active-site Proton acceptor is the tyrosine 158.

It belongs to the short-chain dehydrogenases/reductases (SDR) family. As to quaternary structure, homotetramer.

It catalyses the reaction D-glucose + NAD(+) = D-glucono-1,5-lactone + NADH + H(+). The enzyme catalyses D-glucose + NADP(+) = D-glucono-1,5-lactone + NADPH + H(+). This chain is Glucose 1-dehydrogenase 3 (gdhIII), found in Priestia megaterium (Bacillus megaterium).